Consider the following 437-residue polypeptide: 3-phosphoshikimate 1-carboxyvinyltransferase (437 aa).

3-phosphoshikimate-binding residues include Lys24, Ser25, and Arg29. Lys24 contacts phosphoenolpyruvate. 2 residues coordinate phosphoenolpyruvate: Gly95 and Arg123. The 3-phosphoshikimate site is built by Ser168, Gln170, Asp317, and Lys344. Gln170 lines the phosphoenolpyruvate pocket. The Proton acceptor role is filled by Asp317. Phosphoenolpyruvate contacts are provided by Arg348 and Arg390.

Belongs to the EPSP synthase family. Monomer.

It is found in the cytoplasm. The catalysed reaction is 3-phosphoshikimate + phosphoenolpyruvate = 5-O-(1-carboxyvinyl)-3-phosphoshikimate + phosphate. It functions in the pathway metabolic intermediate biosynthesis; chorismate biosynthesis; chorismate from D-erythrose 4-phosphate and phosphoenolpyruvate: step 6/7. Catalyzes the transfer of the enolpyruvyl moiety of phosphoenolpyruvate (PEP) to the 5-hydroxyl of shikimate-3-phosphate (S3P) to produce enolpyruvyl shikimate-3-phosphate and inorganic phosphate. This chain is 3-phosphoshikimate 1-carboxyvinyltransferase, found in Wolinella succinogenes (strain ATCC 29543 / DSM 1740 / CCUG 13145 / JCM 31913 / LMG 7466 / NCTC 11488 / FDC 602W) (Vibrio succinogenes).